Reading from the N-terminus, the 416-residue chain is Enolase (416 aa).

(2R)-2-phosphoglycerate is bound at residue Q156. The active-site Proton donor is E200. Residues D236, E281, and D308 each contribute to the Mg(2+) site. Residues K333, R362, S363, and K384 each coordinate (2R)-2-phosphoglycerate. K333 functions as the Proton acceptor in the catalytic mechanism.

This sequence belongs to the enolase family. Requires Mg(2+) as cofactor.

The protein resides in the cytoplasm. Its subcellular location is the secreted. The protein localises to the cell surface. The catalysed reaction is (2R)-2-phosphoglycerate = phosphoenolpyruvate + H2O. It participates in carbohydrate degradation; glycolysis; pyruvate from D-glyceraldehyde 3-phosphate: step 4/5. In terms of biological role, catalyzes the reversible conversion of 2-phosphoglycerate (2-PG) into phosphoenolpyruvate (PEP). It is essential for the degradation of carbohydrates via glycolysis. The chain is Enolase from Methanothermobacter thermautotrophicus (strain ATCC 29096 / DSM 1053 / JCM 10044 / NBRC 100330 / Delta H) (Methanobacterium thermoautotrophicum).